Consider the following 1374-residue polypeptide: MTSTSPKSRKPSTKTTKSKSKSKSKSKAAKAAAAGASPALARTPPQFRNRVIDKKALKQLVAWAYKTHGTAVTASMADNLKDLGFRYATQAAVSISVEDLKVPEAKQDLLGQAEAQITATEECYRLGEITEVERHTKVIDTWTETNERLVDAVKKNFNQNDPLNSVWMMANSGARGNMSQVRQLVGMRGLMANPQGEIIDLPIRTNFREGLTVTEYVISSYGARKGLVDTALRTADSGYLTRRLVDVAQDVIVREDDCGTTRGIIVKAEDGGFGSRLVGRLTAEQVVNVDGEILAERNTEIDPPLSKRFEKAAITEVMVRSPLTCEANRSVCRKCYGWALAHNELADLGEAVGIIAAQSIGEPGTQLTMRTFHTGGVSTAETGVVRSTVAGTVEFGPKARVRGYRTPHGLEAQQSEVDFTLTVKPSGKGRAQRIDITTGSLLFVSDGQEIEADVTVVQIAAVAVKKSVEKATKDVICDLAGQVRYEQVIQPREVKDRQGNITLKAQRLGRLWVLAGDVYNLPPNAEPVVQGNVKVERGQVLAEASQASEFGGEVRLRDSIGDSREVQIVTTSMTMKDFKLLGESTHSGELWHLEAKDGTRYRLNTIPGSKIGNGEVVAELADDRFRTQTGGLVRFAPGLAIKKARSAKNGFEVNKGGTLLWIPQETHEINKDISLLMIEDGQWIEAGTEVVKDIFSQTAGIVTVTQKNDILREIIVRSGSFHLCTETKALERFTGDGQIVNPGETIAKGINSEAMVFVQTVDTPEGTGLLLRPMEEYTIPNEAQLPELTHVKQPKGPHLGIKATQRLAFKDGELIKSVEGVELLKTQLILETFDTTPQMTVDVEAVRDKRAKTIERLRLVILESILVRRDTISDSSHGSTHTELQIEDGQSVKASDVVATTQILCKQEGIAQLPVVQEGDPVRRLIVERDEDTITVTTNGSPLVEVGQRLVDGDSLAKDEPSSCCGEVEEVDGKAITLRLGRPYMVSPDSVLHVRDGDLVQRGDGLALLVFERQKTGDIVQGLPRIEELLEARRPRESAVLCKKPGTVEIKQGEDDESITVTVIEADDAIGEYPILLGRNVMVSNGQQVHAGELLTDGPINPHELLDCFFEDLRGRKPLMDAAQEAIAKLQHRLVTEVQNVYKSQGVSIDDKHIEVIVRQMTSKVRIEDAGDTTLLPGELIELRQVEDTNQAMAITGGAPSEFTPVLLGITKASLNTDSFISAASFQETTRVLTEAAIEGKSDWLRGLKENVIIGRLIPAGTGFSGFQEELRAEAGPHPDILAEDPAGYRRMQNLRPDYTVDMPAAPAASSTAVLADPSDADLEATRSRHGIDPAASNFAAFVRPTGENELEEEQLPDPSALEGLQQEGLLTEE.

Residues Met1–Phe47 are disordered. Over residues Lys7–Ala28 the composition is skewed to basic residues. Low complexity predominate over residues Ala29–Ala39. Positions 258, 325, 332, and 335 each coordinate Zn(2+). The disordered stretch occupies residues Arg1344–Glu1374. Low complexity predominate over residues Leu1362–Glu1374.

Belongs to the RNA polymerase beta' chain family. RpoC2 subfamily. In terms of assembly, in cyanobacteria the RNAP catalytic core is composed of 2 alpha, 1 beta, 1 beta', 1 gamma and 1 omega subunit. When a sigma factor is associated with the core the holoenzyme is formed, which can initiate transcription. Zn(2+) is required as a cofactor.

It carries out the reaction RNA(n) + a ribonucleoside 5'-triphosphate = RNA(n+1) + diphosphate. In terms of biological role, DNA-dependent RNA polymerase catalyzes the transcription of DNA into RNA using the four ribonucleoside triphosphates as substrates. The polypeptide is DNA-directed RNA polymerase subunit beta' (Prochlorococcus marinus (strain MIT 9313)).